We begin with the raw amino-acid sequence, 467 residues long: MNTVRSEKDSMGAIDVPADKLWGAQTQRSLEHFRISTEKMPTSLIHALALTKRAAAKVNEDLGLLSEEKASAIRQAADEVLAGQHDDEFPLAIWQTGSGTQSNMNMNEVLANRASELLGGVRGMERKVHPNDDVNKSQSSNDVFPTAMHVAALLALRKQLIPQLKTLTQTLSEKSRAFADIVKIGRTHLQDATPLTLGQEISGWVAMLEHNLKHIEYSLPHVAELALGGTAVGTGLNTHPEYARRVADELAVITCAPFVTAPNKFEALATCDALVQAHGALKGLAASLMKIANDVRWLASGPRCGIGEISIPENEPGSSIMPGKVNPTQCEALTMLCCQVMGNDVAINMGGASGNFELNVFRPMVIHNFLQSVRLLADGMESFNKHCAVGIEPNRERINQLLNESLMLVTALNTHIGYDKAAEIAKKAHKEGLTLKAAALALGYLSEAEFDSWVRPEQMVGSMKAGR.

Residues 98–100, R126, 129–132, 139–141, and T187 contribute to the substrate site; these read SGT, HPND, and SSN. Catalysis depends on H188, which acts as the Proton donor/acceptor. S318 is an active-site residue. Substrate is bound by residues S319 and 324–326; that span reads KVN.

This sequence belongs to the class-II fumarase/aspartase family. Fumarase subfamily. Homotetramer.

It localises to the cytoplasm. The catalysed reaction is (S)-malate = fumarate + H2O. The protein operates within carbohydrate metabolism; tricarboxylic acid cycle; (S)-malate from fumarate: step 1/1. Its function is as follows. Involved in the TCA cycle. Catalyzes the stereospecific interconversion of fumarate to L-malate. The protein is Fumarate hydratase class II of Escherichia coli O157:H7.